The chain runs to 845 residues: Ribosome-releasing factor 2, mitochondrial (845 aa).

The transit peptide at 1-28 (MIIATSLRSQTFCTWRAWRAVHSTAVRL) directs the protein to the mitochondrion. One can recognise a tr-type G domain in the interval 38-330 (DRTRNIGIIA…GVVKYLPSPL (293 aa)). GTP-binding positions include 47-54 (AHIDAGKT), 111-115 (DTPGH), and 165-168 (NKMD).

It belongs to the TRAFAC class translation factor GTPase superfamily. Classic translation factor GTPase family. EF-G/EF-2 subfamily.

The protein resides in the mitochondrion. Functionally, mitochondrial GTPase that mediates the disassembly of ribosomes from messenger RNA at the termination of mitochondrial protein biosynthesis. Not involved in the GTP-dependent ribosomal translocation step during translation elongation. The sequence is that of Ribosome-releasing factor 2, mitochondrial from Scheffersomyces stipitis (strain ATCC 58785 / CBS 6054 / NBRC 10063 / NRRL Y-11545) (Yeast).